The following is a 226-amino-acid chain: Cell division protein SepF (226 aa).

A disordered region spans residues 20–116 (RAYDDAGYDK…ESLTYHTRDN (97 aa)). The segment covering 22-44 (YDDAGYDKGGYRESRYRSSRYSE) has biased composition (basic and acidic residues). Residues 45 to 56 (DFGDEDDEDEEA) show a composition bias toward acidic residues. The segment covering 62–95 (RRGDRSRLERAAARSGDVDHNVEGEQPERVERAS) has biased composition (basic and acidic residues). A compositionally biased stretch (polar residues) spans 97–111 (RSITRSAEPSESLTY).

It belongs to the SepF family. Homodimer. Interacts with FtsZ.

It localises to the cytoplasm. Cell division protein that is part of the divisome complex and is recruited early to the Z-ring. Probably stimulates Z-ring formation, perhaps through the cross-linking of FtsZ protofilaments. Its function overlaps with FtsA. The chain is Cell division protein SepF from Salinispora arenicola (strain CNS-205).